The sequence spans 337 residues: Probable dihydroorotase (337 aa).

Zn(2+) is bound by residues His12, His14, Lys95, His132, His170, and Asp240. Position 95 is an N6-carboxylysine (Lys95).

It belongs to the metallo-dependent hydrolases superfamily. DHOase family. Class II DHOase subfamily. Zn(2+) serves as cofactor.

It catalyses the reaction (S)-dihydroorotate + H2O = N-carbamoyl-L-aspartate + H(+). The protein operates within pyrimidine metabolism; UMP biosynthesis via de novo pathway; (S)-dihydroorotate from bicarbonate: step 3/3. This is Probable dihydroorotase (ura2) from Schizosaccharomyces pombe (strain 972 / ATCC 24843) (Fission yeast).